A 641-amino-acid chain; its full sequence is Sodium-dependent nutrient amino acid transporter 1 (641 aa).

The tract at residues 1–34 is disordered; it reads MELKGVQPSNGSANGNGTTNAASTEKADTEKQTA. Residues 1-38 lie on the Cytoplasmic side of the membrane; sequence MELKGVQPSNGSANGNGTTNAASTEKADTEKQTAERTN. Residues 9–24 show a composition bias toward low complexity; the sequence is SNGSANGNGTTNAAST. Over residues 25 to 34 the composition is skewed to basic and acidic residues; that stretch reads EKADTEKQTA. Helical transmembrane passes span 39-59, 72-92, and 109-129; these read WGNG…LGNV, GAFL…MYYL, and SVVP…ICII. Asparagine 183 and asparagine 188 each carry an N-linked (GlcNAc...) asparagine glycan. 9 consecutive transmembrane segments (helical) span residues 229–249, 258–278, 307–327, 341–361, 401–421, 441–461, 474–494, 516–536, and 552–572; these read PDWK…LVIM, AAYF…IRAV, AVVQ…MFAS, IVTT…FAIL, LFSV…IVAL, VALI…TPGG, TYVV…VYGL, CWSF…MATI, and IAGW…GLWY.

This sequence belongs to the sodium:neurotransmitter symporter (SNF) (TC 2.A.22) family.

It is found in the membrane. Functionally, unusual broad substrate spectrum amino acid:sodium cotransporter that promotes absorption of the D isomers of essential amino acids. Neutral amino acids are the preferred substrates, especially methionine and phenylalanine. The chain is Sodium-dependent nutrient amino acid transporter 1 from Drosophila yakuba (Fruit fly).